The following is a 351-amino-acid chain: tRNA-specific 2-thiouridylase MnmA 2 (351 aa).

ATP-binding positions include 13-20 (GMSGGTDS) and Phe-39. Residue Cys-98 is the Nucleophile of the active site. The cysteines at positions 98 and 195 are disulfide-linked. ATP is bound at residue Gly-122. The interaction with tRNA stretch occupies residues 144 to 146 (KDQ). The Cysteine persulfide intermediate role is filled by Cys-195. The tract at residues 301–302 (RY) is interaction with tRNA.

This sequence belongs to the MnmA/TRMU family.

It localises to the cytoplasm. It carries out the reaction S-sulfanyl-L-cysteinyl-[protein] + uridine(34) in tRNA + AH2 + ATP = 2-thiouridine(34) in tRNA + L-cysteinyl-[protein] + A + AMP + diphosphate + H(+). Functionally, catalyzes the 2-thiolation of uridine at the wobble position (U34) of tRNA, leading to the formation of s(2)U34. The sequence is that of tRNA-specific 2-thiouridylase MnmA 2 from Phocaeicola vulgatus (strain ATCC 8482 / DSM 1447 / JCM 5826 / CCUG 4940 / NBRC 14291 / NCTC 11154) (Bacteroides vulgatus).